We begin with the raw amino-acid sequence, 370 residues long: Uroporphyrinogen decarboxylase (370 aa).

Residues 29 to 33 (RQAGR), aspartate 79, tyrosine 155, serine 210, and histidine 342 contribute to the substrate site.

Belongs to the uroporphyrinogen decarboxylase family. As to quaternary structure, homodimer.

It is found in the cytoplasm. It carries out the reaction uroporphyrinogen III + 4 H(+) = coproporphyrinogen III + 4 CO2. It participates in porphyrin-containing compound metabolism; protoporphyrin-IX biosynthesis; coproporphyrinogen-III from 5-aminolevulinate: step 4/4. Catalyzes the decarboxylation of four acetate groups of uroporphyrinogen-III to yield coproporphyrinogen-III. This is Uroporphyrinogen decarboxylase from Variovorax paradoxus (strain S110).